The following is a 720-amino-acid chain: NADH-ubiquinone oxidoreductase 78 kDa subunit, mitochondrial (720 aa).

A mitochondrion-targeting transit peptide spans 1 to 23; that stretch reads MNSIKSHILRSSKRYISASSKRL. In terms of domain architecture, 2Fe-2S ferredoxin-type spans 24–102; that stretch reads AEVEVTVDGR…GMVVHTDSER (79 aa). [2Fe-2S] cluster contacts are provided by Cys-58, Cys-69, Cys-72, and Cys-86. Residues 102 to 141 enclose the 4Fe-4S His(Cys)3-ligated-type domain; the sequence is RIKKAREGVTEMLLENHPLDCPVCDQGGECDLQEQSQRYG. The 4Fe-4S Mo/W bis-MGD-type domain occupies 241–297; that stretch reads LKRTETIDVLDAVGSNIRVDTRGIEVMRVLPRLNDDVNEEWISDKTRFACDGLKTQR.

This sequence belongs to the complex I 75 kDa subunit family. As to quaternary structure, core subunit of respiratory chain NADH dehydrogenase (Complex I) which is composed of 45 different subunits. This is the largest subunit of complex I and it is a component of the iron-sulfur (IP) fragment of the enzyme. It depends on [2Fe-2S] cluster as a cofactor. The cofactor is [4Fe-4S] cluster.

The protein resides in the mitochondrion. It carries out the reaction a ubiquinone + NADH + 5 H(+)(in) = a ubiquinol + NAD(+) + 4 H(+)(out). In terms of biological role, core subunit of the mitochondrial membrane respiratory chain NADH dehydrogenase (Complex I) which catalyzes electron transfer from NADH through the respiratory chain, using ubiquinone as an electron acceptor. Essential for catalysing the entry and efficient transfer of electrons within complex I. Plays a key role in the assembly and stability of complex I and participates in the association of complex I with ubiquinol-cytochrome reductase complex (Complex III) to form supercomplexes. Plays a role in cell wall integrity and is involved in osmotic and oxidative resistance, yeast to hypha transition, and the ability to damage and invade oral epithelial cells. The chain is NADH-ubiquinone oxidoreductase 78 kDa subunit, mitochondrial from Candida albicans (strain SC5314 / ATCC MYA-2876) (Yeast).